Here is a 402-residue protein sequence, read N- to C-terminus: 4-hydroxy-3-methylbut-2-enyl diphosphate reductase (402 aa).

Cysteine 66 serves as a coordination point for [4Fe-4S] cluster. Histidine 96 contributes to the (2E)-4-hydroxy-3-methylbut-2-enyl diphosphate binding site. Histidine 96 contributes to the dimethylallyl diphosphate binding site. Histidine 96 serves as a coordination point for isopentenyl diphosphate. [4Fe-4S] cluster is bound at residue cysteine 157. Histidine 185 is a binding site for (2E)-4-hydroxy-3-methylbut-2-enyl diphosphate. Histidine 185 is a binding site for dimethylallyl diphosphate. Histidine 185 is a binding site for isopentenyl diphosphate. Residue glutamate 187 is the Proton donor of the active site. Threonine 250 is a (2E)-4-hydroxy-3-methylbut-2-enyl diphosphate binding site. Cysteine 288 is a [4Fe-4S] cluster binding site. Residues serine 317, serine 318, asparagine 319, and serine 379 each contribute to the (2E)-4-hydroxy-3-methylbut-2-enyl diphosphate site. 4 residues coordinate dimethylallyl diphosphate: serine 317, serine 318, asparagine 319, and serine 379. The isopentenyl diphosphate site is built by serine 317, serine 318, asparagine 319, and serine 379.

It belongs to the IspH family. [4Fe-4S] cluster serves as cofactor.

It carries out the reaction isopentenyl diphosphate + 2 oxidized [2Fe-2S]-[ferredoxin] + H2O = (2E)-4-hydroxy-3-methylbut-2-enyl diphosphate + 2 reduced [2Fe-2S]-[ferredoxin] + 2 H(+). The enzyme catalyses dimethylallyl diphosphate + 2 oxidized [2Fe-2S]-[ferredoxin] + H2O = (2E)-4-hydroxy-3-methylbut-2-enyl diphosphate + 2 reduced [2Fe-2S]-[ferredoxin] + 2 H(+). It participates in isoprenoid biosynthesis; dimethylallyl diphosphate biosynthesis; dimethylallyl diphosphate from (2E)-4-hydroxy-3-methylbutenyl diphosphate: step 1/1. Its pathway is isoprenoid biosynthesis; isopentenyl diphosphate biosynthesis via DXP pathway; isopentenyl diphosphate from 1-deoxy-D-xylulose 5-phosphate: step 6/6. Its function is as follows. Catalyzes the conversion of 1-hydroxy-2-methyl-2-(E)-butenyl 4-diphosphate (HMBPP) into a mixture of isopentenyl diphosphate (IPP) and dimethylallyl diphosphate (DMAPP). Acts in the terminal step of the DOXP/MEP pathway for isoprenoid precursor biosynthesis. This Trichormus variabilis (strain ATCC 29413 / PCC 7937) (Anabaena variabilis) protein is 4-hydroxy-3-methylbut-2-enyl diphosphate reductase.